A 251-amino-acid chain; its full sequence is MARFTNCLLKNIFTRSQFDSAKRRQCLQYLNALRSLQHNGYKTVYFGETEIPETLVTGEDFSDSYYIHTPSWCILHAGGSQGWVPWKYRMFLRNDLCIKKEDSLFLEFCDVVKRAYGKCAIVVKGRRQQDEMKPKTDKEGEAKAYVPTSINLTSIACSPGVAKSYGHELISLPPYYNYLNPLDSAWSSMKWFIINNRKEFCLQSVDNVYTYRYILFSDLISKGIEKVNLTKWKAITNKVRRWENYYLAKFS.

Belongs to the FAM243 family.

This is an uncharacterized protein from Mus musculus (Mouse).